Consider the following 705-residue polypeptide: Polyribonucleotide nucleotidyltransferase (705 aa).

2 residues coordinate Mg(2+): Asp486 and Asp492. The KH domain occupies 553–612; that stretch reads PRIHTIRINPDKIKDVIGKGGSVIRALTEETGTTIEIEDDGTVKIAATDGEKAKFAIRRI. The S1 motif domain occupies 622–690; the sequence is GRIYQGKVTR…RQGRVRLSIK (69 aa).

Belongs to the polyribonucleotide nucleotidyltransferase family. As to quaternary structure, component of the RNA degradosome, which is a multiprotein complex involved in RNA processing and mRNA degradation. It depends on Mg(2+) as a cofactor.

It localises to the cytoplasm. The catalysed reaction is RNA(n+1) + phosphate = RNA(n) + a ribonucleoside 5'-diphosphate. Involved in mRNA degradation. Catalyzes the phosphorolysis of single-stranded polyribonucleotides processively in the 3'- to 5'-direction. This Serratia proteamaculans (strain 568) protein is Polyribonucleotide nucleotidyltransferase.